The primary structure comprises 100 residues: Large ribosomal subunit protein bL27 (100 aa).

Positions 1–9 are excised as a propeptide; it reads MLVMNLQLF.

This sequence belongs to the bacterial ribosomal protein bL27 family. Post-translationally, the N-terminus is cleaved by ribosomal processing cysteine protease Prp.

This is Large ribosomal subunit protein bL27 from Clostridium botulinum (strain 657 / Type Ba4).